The following is a 163-amino-acid chain: Cyclic pyranopterin monophosphate synthase (163 aa).

Substrate contacts are provided by residues 79 to 81 and 117 to 118; these read LCH and ME. Asp-132 is an active-site residue.

It belongs to the MoaC family. In terms of assembly, homohexamer; trimer of dimers.

It catalyses the reaction (8S)-3',8-cyclo-7,8-dihydroguanosine 5'-triphosphate = cyclic pyranopterin phosphate + diphosphate. It participates in cofactor biosynthesis; molybdopterin biosynthesis. Catalyzes the conversion of (8S)-3',8-cyclo-7,8-dihydroguanosine 5'-triphosphate to cyclic pyranopterin monophosphate (cPMP). This chain is Cyclic pyranopterin monophosphate synthase, found in Chloroflexus aurantiacus (strain ATCC 29366 / DSM 635 / J-10-fl).